Reading from the N-terminus, the 59-residue chain is Large ribosomal subunit protein uL30 (59 aa).

This sequence belongs to the universal ribosomal protein uL30 family. As to quaternary structure, part of the 50S ribosomal subunit.

The protein is Large ribosomal subunit protein uL30 of Edwardsiella ictaluri (strain 93-146).